We begin with the raw amino-acid sequence, 634 residues long: Kinesin-like protein KIF22 (634 aa).

The region spanning 19–345 (RVRVAVRLRP…LNFAAKSKQI (327 aa)) is the Kinesin motor domain. 103–110 (GPTGAGKT) lines the ATP pocket. The tract at residues 357-406 (APTIAPGKRTREEQEAGGSGEPQNKRSKEGKKAEHSPSPPLHPQSSPDSS) is disordered. The segment covering 379–391 (QNKRSKEGKKAEH) has biased composition (basic and acidic residues). A coiled-coil region spans residues 421–471 (SAERERLNLLKTVAQSRKEIQMLKEKQKELEDKANMFNKQKETTEKESKDA).

This sequence belongs to the TRAFAC class myosin-kinesin ATPase superfamily. Kinesin family. Post-translationally, ubiquitinated, leading to its subsequent proteasomal degradation.

Its subcellular location is the nucleus. It localises to the cytoplasm. The protein localises to the cytoskeleton. In terms of biological role, kinesin family member that is involved in spindle formation and the movements of chromosomes during mitosis and meiosis. Binds to microtubules and to DNA. The protein is Kinesin-like protein KIF22 (kif22) of Danio rerio (Zebrafish).